The primary structure comprises 274 residues: TATA box-binding protein-associated factor RNA polymerase I subunit D (274 aa).

Residues 1–19 are compositionally biased toward polar residues; that stretch reads MDSLNYTTACDSAVETENQ. Disordered stretches follow at residues 1-45 and 84-111; these read MDSL…RQRN and NKKRKRKKKKYKPTGRSVGRPKGRRTTR. The residue at position 20 (S20) is a Phosphoserine. Positions 84 to 110 are enriched in basic residues; sequence NKKRKRKKKKYKPTGRSVGRPKGRRTT. 2 positions are modified to phosphoserine: S132 and S229.

In terms of assembly, component of the transcription factor SL1/TIF-IB complex, composed of TBP and at least TAF1A, TAF1B, TAF1C and TAF1D. Interacts with UBTF.

It is found in the nucleus. Functionally, component of the transcription factor SL1/TIF-IB complex, which is involved in the assembly of the PIC (preinitiation complex) during RNA polymerase I-dependent transcription. The rate of PIC formation probably is primarily dependent on the rate of association of SL1/TIF-IB with the rDNA promoter. SL1/TIF-IB is involved in stabilization of nucleolar transcription factor 1/UBTF on rDNA. Formation of SL1/TIF-IB excludes the association of TBP with TFIID subunits. This chain is TATA box-binding protein-associated factor RNA polymerase I subunit D (TAF1D), found in Bos taurus (Bovine).